We begin with the raw amino-acid sequence, 247 residues long: E3 ubiquitin-protein ligase RNF182 (247 aa).

Residues 20–68 (CKICYNRYNLKQRKPKVLECCHRVCAKCLYKIIDFGDSPQGVIVCPFCR) form an RING-type zinc finger. 2 helical membrane-spanning segments follow: residues 184 to 204 (VLVWLLGLLYFSSLPLGIYLL) and 211 to 231 (LGVVFVSLVPSSLVILMVYGF).

As to quaternary structure, interacts with ATP6V0C. As to expression, up-regulated in neuronal cells subjected to cell death-inducing injuries, such as oxygen and glucose deprivation (at protein level). Could be up-regulated in Alzheimer disease brains. Highly expressed in innate immune organs such as lymph nodes and spleen and in immune cells such as macrophages and dendritic cells.

The protein resides in the membrane. The protein localises to the cytoplasm. The enzyme catalyses S-ubiquitinyl-[E2 ubiquitin-conjugating enzyme]-L-cysteine + [acceptor protein]-L-lysine = [E2 ubiquitin-conjugating enzyme]-L-cysteine + N(6)-ubiquitinyl-[acceptor protein]-L-lysine.. Its pathway is protein modification; protein ubiquitination. In terms of biological role, E3 ubiquitin-protein ligase that mediates the ubiquitination of ATP6V0C and targets it to degradation via the ubiquitin-proteasome pathway. Also plays a role in the inhibition of TLR-triggered innate immune response by mediating 'Lys'-48-linked ubiquitination and subsequent degradation of NF-kappa-B component RELA. This chain is E3 ubiquitin-protein ligase RNF182 (RNF182), found in Homo sapiens (Human).